The sequence spans 208 residues: Thymidylate kinase (208 aa).

10–17 (GPEGSGKT) provides a ligand contact to ATP.

The protein belongs to the thymidylate kinase family.

The enzyme catalyses dTMP + ATP = dTDP + ADP. Its function is as follows. Phosphorylation of dTMP to form dTDP in both de novo and salvage pathways of dTTP synthesis. The protein is Thymidylate kinase of Bacillus cereus (strain B4264).